The following is a 354-amino-acid chain: Uroporphyrinogen decarboxylase (354 aa).

Residues 27 to 31 (RQAGR), D77, Y154, T209, and H327 contribute to the substrate site.

It belongs to the uroporphyrinogen decarboxylase family. As to quaternary structure, homodimer.

It localises to the cytoplasm. It catalyses the reaction uroporphyrinogen III + 4 H(+) = coproporphyrinogen III + 4 CO2. It participates in porphyrin-containing compound metabolism; protoporphyrin-IX biosynthesis; coproporphyrinogen-III from 5-aminolevulinate: step 4/4. In terms of biological role, catalyzes the decarboxylation of four acetate groups of uroporphyrinogen-III to yield coproporphyrinogen-III. The sequence is that of Uroporphyrinogen decarboxylase from Cronobacter sakazakii (strain ATCC BAA-894) (Enterobacter sakazakii).